A 458-amino-acid chain; its full sequence is UDP-N-acetylmuramoylalanine--D-glutamate ligase (458 aa).

Gly124–Thr130 is an ATP binding site.

The protein belongs to the MurCDEF family.

The protein resides in the cytoplasm. The catalysed reaction is UDP-N-acetyl-alpha-D-muramoyl-L-alanine + D-glutamate + ATP = UDP-N-acetyl-alpha-D-muramoyl-L-alanyl-D-glutamate + ADP + phosphate + H(+). It functions in the pathway cell wall biogenesis; peptidoglycan biosynthesis. In terms of biological role, cell wall formation. Catalyzes the addition of glutamate to the nucleotide precursor UDP-N-acetylmuramoyl-L-alanine (UMA). The chain is UDP-N-acetylmuramoylalanine--D-glutamate ligase from Clostridium novyi (strain NT).